Here is a 223-residue protein sequence, read N- to C-terminus: Proteinase inhibitor type-2 TR8 (223 aa).

The N-terminal stretch at 1–24 (MAIYKVALLLLFGMILLASDFEHA) is a signal peptide. 3 repeat units span residues 24 to 81 (AKAC…EWVS), 88 to 145 (KKAC…EWVS), and 152 to 209 (EKDC…EWVS). Intrachain disulfides connect cysteine 27–cysteine 120, cysteine 31–cysteine 116, cysteine 40–cysteine 126, cysteine 52–cysteine 95, cysteine 55–cysteine 73, cysteine 56–cysteine 91, cysteine 62–cysteine 104, and cysteine 119–cysteine 137.

It belongs to the protease inhibitor I20 (potato type II proteinase inhibitor) family.

The sequence is that of Proteinase inhibitor type-2 TR8 (ARPI) from Solanum lycopersicum (Tomato).